A 416-amino-acid polypeptide reads, in one-letter code: Serine hydroxymethyltransferase (416 aa).

Residues leucine 121 and 125 to 127 (GHL) contribute to the (6S)-5,6,7,8-tetrahydrofolate site. N6-(pyridoxal phosphate)lysine is present on lysine 229.

Belongs to the SHMT family. As to quaternary structure, homodimer. Pyridoxal 5'-phosphate is required as a cofactor.

The protein resides in the cytoplasm. The enzyme catalyses (6R)-5,10-methylene-5,6,7,8-tetrahydrofolate + glycine + H2O = (6S)-5,6,7,8-tetrahydrofolate + L-serine. It participates in one-carbon metabolism; tetrahydrofolate interconversion. The protein operates within amino-acid biosynthesis; glycine biosynthesis; glycine from L-serine: step 1/1. In terms of biological role, catalyzes the reversible interconversion of serine and glycine with tetrahydrofolate (THF) serving as the one-carbon carrier. This reaction serves as the major source of one-carbon groups required for the biosynthesis of purines, thymidylate, methionine, and other important biomolecules. Also exhibits THF-independent aldolase activity toward beta-hydroxyamino acids, producing glycine and aldehydes, via a retro-aldol mechanism. The protein is Serine hydroxymethyltransferase of Neisseria meningitidis serogroup A / serotype 4A (strain DSM 15465 / Z2491).